We begin with the raw amino-acid sequence, 140 residues long: NTF2-related export protein 1 (140 aa).

The residue at position 2 (Ala-2) is an N-acetylalanine. One can recognise an NTF2 domain in the interval 16–135 (AAEEFVNVYY…WKIASDCFRF (120 aa)).

In terms of assembly, heterodimer with NXF1. Forms a complex with RANGAP1, RANBP2/NUP358 and NXF1. Interacts (via NTF2 domain) with NXF1. Stabilizes the NTF2 domain of NXF1 by heterodimerization. The formation of NXF1-NXT1 heterodimers is required for the NXF1-mediated nuclear mRNA export. Preferentially binds Ran-GTP. Associates with NXF2, NXF3 and NXF5. Does not bind nucleoporins (NPC) directly, its association to NPC is mediated by NXF1.

The protein localises to the nucleus. The protein resides in the nucleus speckle. It is found in the cytoplasm. In terms of biological role, stimulator of protein export for NES-containing proteins. Also plays a role in the nuclear export of U1 snRNA, tRNA, and mRNA. The NXF1-NXT1 heterodimer is involved in the export of HSP70 mRNA in conjunction with ALYREF/THOC4 and THOC5. The polypeptide is NTF2-related export protein 1 (NXT1) (Bos taurus (Bovine)).